The primary structure comprises 432 residues: Enolase (432 aa).

(2R)-2-phosphoglycerate is bound at residue Q163. Catalysis depends on E205, which acts as the Proton donor. Mg(2+) is bound by residues D242, E285, and D312. Positions 337, 366, 367, and 388 each coordinate (2R)-2-phosphoglycerate. Residue K337 is the Proton acceptor of the active site.

Belongs to the enolase family. The cofactor is Mg(2+).

The protein resides in the cytoplasm. The protein localises to the secreted. It localises to the cell surface. The catalysed reaction is (2R)-2-phosphoglycerate = phosphoenolpyruvate + H2O. The protein operates within carbohydrate degradation; glycolysis; pyruvate from D-glyceraldehyde 3-phosphate: step 4/5. In terms of biological role, catalyzes the reversible conversion of 2-phosphoglycerate (2-PG) into phosphoenolpyruvate (PEP). It is essential for the degradation of carbohydrates via glycolysis. The sequence is that of Enolase from Bifidobacterium longum (strain DJO10A).